The sequence spans 382 residues: ATP phosphoribosyltransferase regulatory subunit (382 aa).

Belongs to the class-II aminoacyl-tRNA synthetase family. HisZ subfamily. As to quaternary structure, heteromultimer composed of HisG and HisZ subunits.

The protein localises to the cytoplasm. It participates in amino-acid biosynthesis; L-histidine biosynthesis; L-histidine from 5-phospho-alpha-D-ribose 1-diphosphate: step 1/9. Its function is as follows. Required for the first step of histidine biosynthesis. May allow the feedback regulation of ATP phosphoribosyltransferase activity by histidine. This Burkholderia pseudomallei (strain 1106a) protein is ATP phosphoribosyltransferase regulatory subunit.